The sequence spans 358 residues: Type II restriction enzyme CviJI (358 aa).

Requires Mg(2+) as cofactor.

It carries out the reaction Endonucleolytic cleavage of DNA to give specific double-stranded fragments with terminal 5'-phosphates.. In terms of biological role, a P subtype restriction enzyme that recognizes the double-stranded sequence 5'-RGCY-3' and cleaves after G-2. In the presence of ATP, there is a relaxation of its specificity and it can cleave 5'-RGCN-3' and 5'-YGCY-3', but not 5'-YGCR-3' (R.CviJI* activity). This Paramecium bursaria Chlorella virus IL3A (PBCV-IL3A) protein is Type II restriction enzyme CviJI.